Consider the following 278-residue polypeptide: NAD-dependent protein deacylase (278 aa).

In terms of domain architecture, Deacetylase sirtuin-type spans 22 to 270 (RSRIFHRDSA…PEYIREFLTT (249 aa)). 46–65 (GAGISAESGIRTFRADDGLW) lines the NAD(+) pocket. Substrate is bound by residues Y90 and R93. NAD(+) is bound at residue 127–130 (QNID). The active-site Proton acceptor is H145. Zn(2+)-binding residues include C153 and C172. NAD(+) is bound by residues 212 to 214 (GTS), 238 to 240 (NLE), and A256.

This sequence belongs to the sirtuin family. Class III subfamily. It depends on Zn(2+) as a cofactor.

It localises to the cytoplasm. It catalyses the reaction N(6)-acetyl-L-lysyl-[protein] + NAD(+) + H2O = 2''-O-acetyl-ADP-D-ribose + nicotinamide + L-lysyl-[protein]. It carries out the reaction N(6)-succinyl-L-lysyl-[protein] + NAD(+) + H2O = 2''-O-succinyl-ADP-D-ribose + nicotinamide + L-lysyl-[protein]. The enzyme catalyses N(6)-(2-hydroxyisobutanoyl)-L-lysyl-[protein] + NAD(+) + H2O = 2''-O-(2-hydroxyisobutanoyl)-ADP-D-ribose + nicotinamide + L-lysyl-[protein]. Functionally, NAD-dependent lysine deacetylase that specifically removes acetyl groups on target proteins. Also acts as a protein-lysine deacylase by mediating protein desuccinylation and de-2-hydroxyisobutyrylation. Modulates the activities of several proteins which are inactive in their acylated form. This chain is NAD-dependent protein deacylase, found in Yersinia pestis.